Here is a 634-residue protein sequence, read N- to C-terminus: tRNA uridine 5-carboxymethylaminomethyl modification enzyme MnmG (634 aa).

14 to 19 (GGGHAG) contacts FAD. NAD(+) is bound at residue 279–293 (GPRYCPSIEDKVVRF).

The protein belongs to the MnmG family. Homodimer. Heterotetramer of two MnmE and two MnmG subunits. FAD is required as a cofactor.

It localises to the cytoplasm. NAD-binding protein involved in the addition of a carboxymethylaminomethyl (cmnm) group at the wobble position (U34) of certain tRNAs, forming tRNA-cmnm(5)s(2)U34. This chain is tRNA uridine 5-carboxymethylaminomethyl modification enzyme MnmG, found in Xanthomonas euvesicatoria pv. vesicatoria (strain 85-10) (Xanthomonas campestris pv. vesicatoria).